Here is a 564-residue protein sequence, read N- to C-terminus: Isocitrate dehydrogenase kinase/phosphatase (564 aa).

Residues Ala-315–Met-321 and Lys-336 each bind ATP. Asp-371 is a catalytic residue.

This sequence belongs to the AceK family.

It localises to the cytoplasm. It carries out the reaction L-seryl-[isocitrate dehydrogenase] + ATP = O-phospho-L-seryl-[isocitrate dehydrogenase] + ADP + H(+). Its function is as follows. Bifunctional enzyme which can phosphorylate or dephosphorylate isocitrate dehydrogenase (IDH) on a specific serine residue. This is a regulatory mechanism which enables bacteria to bypass the Krebs cycle via the glyoxylate shunt in response to the source of carbon. When bacteria are grown on glucose, IDH is fully active and unphosphorylated, but when grown on acetate or ethanol, the activity of IDH declines drastically concomitant with its phosphorylation. This chain is Isocitrate dehydrogenase kinase/phosphatase, found in Idiomarina loihiensis (strain ATCC BAA-735 / DSM 15497 / L2-TR).